Reading from the N-terminus, the 345-residue chain is MPQIRNDWTIEEVQNLLQMPLNDLVFEAQTVHRQHFNPNEVQVSTLLSIKTGACPEDCKYCPQSAHYHTGLDRERLMAVESVLAEAQAAKEKGASRFCMGAAWRNPKDRDMPYVIEMIKGVKALGLESCMTLGMLSNEQAKMLQQAGLDYYNHNLDTSPEFYGDIITTRTYQDRLNTLNNVRDAGMKVCAGGIVGMGESVTDRASLLVQLANLPKHPESVPINMLVKVEGTPFAKLEDLDNFEFVRTVAVARILMPASHVRLSAGREDMNDEMQALCFLAGANSIFYGEKLLTTANPEADADLRLFERLGIKPEQRDGYDDEVHTAVIEDAIKEQQNPVRYYDAS.

A Radical SAM core domain is found at 39–266 (NEVQVSTLLS…ASHVRLSAGR (228 aa)). [4Fe-4S] cluster-binding residues include Cys-54, Cys-58, and Cys-61. [2Fe-2S] cluster-binding residues include Cys-98, Cys-129, Cys-189, and Arg-261.

This sequence belongs to the radical SAM superfamily. Biotin synthase family. In terms of assembly, homodimer. [4Fe-4S] cluster is required as a cofactor. Requires [2Fe-2S] cluster as cofactor.

The enzyme catalyses (4R,5S)-dethiobiotin + (sulfur carrier)-SH + 2 reduced [2Fe-2S]-[ferredoxin] + 2 S-adenosyl-L-methionine = (sulfur carrier)-H + biotin + 2 5'-deoxyadenosine + 2 L-methionine + 2 oxidized [2Fe-2S]-[ferredoxin]. Its pathway is cofactor biosynthesis; biotin biosynthesis; biotin from 7,8-diaminononanoate: step 2/2. Catalyzes the conversion of dethiobiotin (DTB) to biotin by the insertion of a sulfur atom into dethiobiotin via a radical-based mechanism. The chain is Biotin synthase from Idiomarina loihiensis (strain ATCC BAA-735 / DSM 15497 / L2-TR).